Here is a 189-residue protein sequence, read N- to C-terminus: UPF0301 protein RP032 (189 aa).

Belongs to the UPF0301 (AlgH) family.

This chain is UPF0301 protein RP032, found in Rickettsia prowazekii (strain Madrid E).